A 448-amino-acid polypeptide reads, in one-letter code: Phosphohexose mutases (448 aa).

Ser-97 (phosphoserine intermediate) is an active-site residue. 4 residues coordinate Mg(2+): Ser-97, Asp-237, Asp-239, and Asp-241.

It belongs to the phosphohexose mutase family. Mg(2+) serves as cofactor.

The enzyme catalyses alpha-D-glucose 1-phosphate = alpha-D-glucose 6-phosphate. It carries out the reaction alpha-D-mannose 1-phosphate = D-mannose 6-phosphate. It participates in nucleotide-sugar biosynthesis; GDP-alpha-D-mannose biosynthesis; alpha-D-mannose 1-phosphate from D-fructose 6-phosphate: step 2/2. In terms of biological role, involved in xanthan production. In Xanthomonas campestris pv. campestris (strain B100), this protein is Phosphohexose mutases (xanA).